A 475-amino-acid chain; its full sequence is tRNA-2-methylthio-N(6)-dimethylallyladenosine synthase (475 aa).

The span at 1–10 (MQETTVKRDG) shows a compositional bias: basic and acidic residues. The tract at residues 1 to 22 (MQETTVKRDGASPSDAGTPATT) is disordered. The region spanning 27 to 144 (GKLYIRTFGC…LPDLIKRRRA (118 aa)) is the MTTase N-terminal domain. Residues Cys36, Cys73, Cys107, Cys181, Cys185, and Cys188 each contribute to the [4Fe-4S] cluster site. Residues 167 to 400 (RVDGATAFVS…QALINQQAAA (234 aa)) form the Radical SAM core domain. Residues 403 to 466 (QGMIGTRQRV…TNSLRGRVAG (64 aa)) enclose the TRAM domain.

The protein belongs to the methylthiotransferase family. MiaB subfamily. In terms of assembly, monomer. [4Fe-4S] cluster is required as a cofactor.

It is found in the cytoplasm. The enzyme catalyses N(6)-dimethylallyladenosine(37) in tRNA + (sulfur carrier)-SH + AH2 + 2 S-adenosyl-L-methionine = 2-methylsulfanyl-N(6)-dimethylallyladenosine(37) in tRNA + (sulfur carrier)-H + 5'-deoxyadenosine + L-methionine + A + S-adenosyl-L-homocysteine + 2 H(+). Catalyzes the methylthiolation of N6-(dimethylallyl)adenosine (i(6)A), leading to the formation of 2-methylthio-N6-(dimethylallyl)adenosine (ms(2)i(6)A) at position 37 in tRNAs that read codons beginning with uridine. This Bordetella bronchiseptica (strain ATCC BAA-588 / NCTC 13252 / RB50) (Alcaligenes bronchisepticus) protein is tRNA-2-methylthio-N(6)-dimethylallyladenosine synthase.